The sequence spans 497 residues: Serine/threonine-protein kinase cst-1 (497 aa).

Residues 1–27 (MPPSTDSSRRNSEEGSSDGFKLDSSAL) form a disordered region. The Protein kinase domain maps to 35 to 286 (FDIVGKLGEG…ALRLCEHTFI (252 aa)). Residues 41-49 (LGEGSYGSV) and Lys-64 contribute to the ATP site. The active-site Proton acceptor is Asp-154. The interval 367–416 (KSAYIPGSSKNGNSPRVQPPGHTASASDPSKNQPFAQDGTGPNFQLGTSE) is disordered. A compositionally biased stretch (polar residues) spans 390-416 (ASASDPSKNQPFAQDGTGPNFQLGTSE). Positions 446–493 (FEFLRNITLDELIRRKESLDSEMEEEIRELQRRYKTKRQPILDVIEIK) constitute an SARAH domain. Residues 450-486 (RNITLDELIRRKESLDSEMEEEIRELQRRYKTKRQPI) are a coiled coil.

It belongs to the protein kinase superfamily. STE Ser/Thr protein kinase family. STE20 subfamily. In terms of assembly, interacts with rsf-1 (via SARAH domain); the interaction is required for the phosphorylation of cst-1. Requires Mg(2+) as cofactor. Proteolytically cleaved by caspase-3 during apoptosis which results in kinase activation. In terms of processing, phosphorylated. In terms of tissue distribution, widely expressed in epidermal cells.

The catalysed reaction is L-seryl-[protein] + ATP = O-phospho-L-seryl-[protein] + ADP + H(+). The enzyme catalyses L-threonyl-[protein] + ATP = O-phospho-L-threonyl-[protein] + ADP + H(+). Functionally, serine/threonine-protein kinase which extends lifespan and delays tissue aging, probably by activating daf-16. The sequence is that of Serine/threonine-protein kinase cst-1 from Caenorhabditis elegans.